The sequence spans 141 residues: Lutropin subunit beta (141 aa).

A signal peptide spans 1–20; it reads MEMLQGLLLWLLLSVGGVWA. 6 disulfides stabilise this stretch: Cys-29–Cys-77, Cys-43–Cys-92, Cys-46–Cys-130, Cys-54–Cys-108, Cys-58–Cys-110, and Cys-113–Cys-120. N-linked (GlcNAc...) asparagine glycosylation is present at Asn-33.

Belongs to the glycoprotein hormones subunit beta family. As to quaternary structure, heterodimer of a common alpha chain and a unique beta chain which confers biological specificity to thyrotropin, lutropin, follitropin and gonadotropin.

It is found in the secreted. Functionally, promotes spermatogenesis and ovulation by stimulating the testes and ovaries to synthesize steroids. The polypeptide is Lutropin subunit beta (LHB1) (Ceratotherium simum (White rhinoceros)).